A 661-amino-acid polypeptide reads, in one-letter code: Peroxisomal acyl-coenzyme A oxidase 1 (661 aa).

Ser-26 carries the post-translational modification Phosphoserine. An N6-acetyllysine modification is found at Lys-65. An N6-succinyllysine mark is found at Lys-89 and Lys-90. Residue Thr-139 coordinates FAD. The residue at position 159 (Lys-159) is an N6-succinyllysine. Position 178 (Gly-178) interacts with FAD. Position 216 is an N6-acetyllysine (Lys-216). An N6-succinyllysine modification is found at Lys-241. Lys-255, Lys-267, and Lys-272 each carry N6-acetyllysine. At Lys-349 the chain carries N6-succinyllysine. The Proton acceptor role is filled by Glu-421. N6-acetyllysine; alternate occurs at positions 437 and 446. An N6-succinyllysine; alternate mark is found at Lys-437 and Lys-446. N6-acetyllysine is present on Lys-500. At Lys-512 the chain carries N6-acetyllysine; alternate. Residue Lys-512 is modified to N6-succinyllysine; alternate. An N6-succinyllysine modification is found at Lys-542. Lys-637 is subject to N6-acetyllysine; alternate. An N6-succinyllysine; alternate modification is found at Lys-637. At Lys-643 the chain carries N6-succinyllysine. Ser-649 bears the Phosphoserine mark. The residue at position 652 (Lys-652) is an N6-acetyllysine. Lys-655 is subject to N6-succinyllysine. The short motif at 659-661 is the Microbody targeting signal element; it reads SKL.

It belongs to the acyl-CoA oxidase family. As to quaternary structure, homodimer. The enzyme contains three components A, B and C, the latter two being produced from the first by a proteolytic cleavage. Interacts with LONP2. Requires FAD as cofactor. As to expression, expressed in Schwann cells. Expressed (at protein level) in liver.

The protein resides in the peroxisome. It carries out the reaction a 2,3-saturated acyl-CoA + O2 = a (2E)-enoyl-CoA + H2O2. It catalyses the reaction hexadecanoyl-CoA + O2 = (2E)-hexadecenoyl-CoA + H2O2. The catalysed reaction is dodecanoyl-CoA + O2 = (2E)-dodecenoyl-CoA + H2O2. The enzyme catalyses octanoyl-CoA + O2 = (2E)-octenoyl-CoA + H2O2. It carries out the reaction decanoyl-CoA + O2 = (2E)-decenoyl-CoA + H2O2. It catalyses the reaction tetradecanoyl-CoA + O2 = (2E)-tetradecenoyl-CoA + H2O2. The catalysed reaction is hexadecanedioyl-CoA + O2 = (2E)-hexadecenedioyl-CoA + H2O2. The enzyme catalyses tetracosanoyl-CoA + O2 = (2E)-tetracosenoyl-CoA + H2O2. It carries out the reaction glutaryl-CoA + O2 = (2E)-glutaconyl-CoA + H2O2. It catalyses the reaction hexanoyl-CoA + O2 = (2E)-hexenoyl-CoA + H2O2. The catalysed reaction is octadecanoyl-CoA + O2 = (2E)-octadecenoyl-CoA + H2O2. The enzyme catalyses (5Z,8Z,11Z,14Z,17Z)-eicosapentaenoyl-CoA + O2 = (2E,5Z,8Z,11Z,14Z,17Z)-icosahexaenoyl-CoA + H2O2. It carries out the reaction (6Z,9Z,12Z,15Z,18Z,21Z)-tetracosahexaenoyl-CoA + O2 = (2E,6Z,9Z,12Z,15Z,18Z,21Z)-tetracosaheptaenoyl-CoA + H2O2. It functions in the pathway lipid metabolism; peroxisomal fatty acid beta-oxidation. Involved in the initial and rate-limiting step of peroxisomal beta-oxidation of straight-chain saturated and unsaturated very-long-chain fatty acids. Catalyzes the desaturation of fatty acyl-CoAs such as palmitoyl-CoA (hexadecanoyl-CoA) to 2-trans-enoyl-CoAs ((2E)-enoyl-CoAs) such as (2E)-hexadecenoyl-CoA, and donates electrons directly to molecular oxygen (O(2)), thereby producing hydrogen peroxide (H(2)O(2)). Functionally, shows highest activity against medium-chain fatty acyl-CoAs. Shows optimum activity with a chain length of 10 carbons (decanoyl-CoA) in vitro. Its function is as follows. Is active against a much broader range of substrates and shows activity towards long-chain acyl-CoAs. The protein is Peroxisomal acyl-coenzyme A oxidase 1 of Rattus norvegicus (Rat).